We begin with the raw amino-acid sequence, 853 residues long: Envelope glycoprotein gp160 (853 aa).

The N-terminal stretch at 1 to 31 (MRARGIERNCQNWWKWGIMLLGILMTCSAAD) is a signal peptide. Residues 32 to 681 (NLWVTVYYGV…ITQWLWYIKI (650 aa)) lie on the Extracellular side of the membrane. A disulfide bridge connects residues C53 and C73. N-linked (GlcNAc...) asparagine; by host glycosylation is found at N87, N129, N137, N143, N153, N157, N183, N188, N198, N235, N242, N263, N277, and N290. Disulfide bonds link C118–C206, C125–C197, C130–C154, C219–C248, and C229–C240. The V1 stretch occupies residues 130 to 153 (CSDELRNNGTMGNNVTTEEKGMKN). The V2 stretch occupies residues 154–197 (CSFNVTTVLKDKKQQVYALFYRLDIVPIDNDSSTNSTNYRLINC). Residues 297-329 (CARPYQNTRQRTPIGLGQSLYTTRSRSIIGQAH) form a V3 region. C297 and C330 are disulfide-bonded. 2 N-linked (GlcNAc...) asparagine; by host glycosylation sites follow: N331 and N353. A CD4-binding loop region spans residues 362-372 (SSGGDPEITTH). 2 cysteine pairs are disulfide-bonded: C376–C442 and C383–C416. Residues 383 to 416 (CNTSGLFNSTWNISAWNNITESNNSTNTNITLQC) form a V4 region. N-linked (GlcNAc...) asparagine; by host glycosylation is found at N384, N390, N394, N400, N405, N406, N411, N445, N458, N459, and N462. V5 stretches follow at residues 457–468 (INNSTNETFRPG) and 460–468 (STNETFRPG). A fusion peptide region spans residues 509 to 529 (AIGLGAMFLGFLGAAGSTMGA). Residues 571-589 (KQLQARILAVERYLKDQQL) form an immunosuppression region. Cysteines 595 and 601 form a disulfide. N608, N613, N622, and N634 each carry an N-linked (GlcNAc...) asparagine; by host glycan. Residues 630-664 (REIDNYTGLIYSLIEESQTQQEKNEKELLELDKWA) are a coiled coil. Residues 659–680 (ELDKWASLWNWFSITQWLWYIK) form an MPER; binding to GalCer region. The helical transmembrane segment at 682-702 (FIMIIGGLIGLRIVFAVLSLV) threads the bilayer. The Cytoplasmic segment spans residues 703–853 (NRVRQGYSPL…IRQGLERSLL (151 aa)). The YXXL motif; contains endocytosis signal motif lies at 709 to 712 (YSPL). A disordered region spans residues 716-738 (TLLPAPRGPDRPEGTEEEGGERG). Positions 723 to 738 (GPDRPEGTEEEGGERG) are enriched in basic and acidic residues. S-palmitoyl cysteine; by host attachment occurs at residues C761 and C834. Residues 852–853 (LL) carry the Di-leucine internalization motif motif.

It belongs to the HIV-1 env protein family. The mature envelope protein (Env) consists of a homotrimer of non-covalently associated gp120-gp41 heterodimers. The resulting complex protrudes from the virus surface as a spike. There seems to be as few as 10 spikes on the average virion. Interacts with host CD4, CCR5 and CXCR4. Gp120 also interacts with the C-type lectins CD209/DC-SIGN and CLEC4M/DC-SIGNR (collectively referred to as DC-SIGN(R)). Gp120 and gp41 interact with GalCer. Gp120 interacts with host ITGA4/ITGB7 complex; on CD4+ T-cells, this interaction results in rapid activation of integrin ITGAL/LFA-1, which facilitates efficient cell-to-cell spreading of HIV-1. Gp120 interacts with cell-associated heparan sulfate; this interaction increases virus infectivity on permissive cells and may be involved in infection of CD4- cells. As to quaternary structure, the mature envelope protein (Env) consists of a homotrimer of non-covalently associated gp120-gp41 heterodimers. The resulting complex protrudes from the virus surface as a spike. There seems to be as few as 10 spikes on the average virion. Highly glycosylated by host. The high number of glycan on the protein is reffered to as 'glycan shield' because it contributes to hide protein sequence from adaptive immune system. In terms of processing, palmitoylation of the transmembrane protein and of Env polyprotein (prior to its proteolytic cleavage) is essential for their association with host cell membrane lipid rafts. Palmitoylation is therefore required for envelope trafficking to classical lipid rafts, but not for viral replication. Post-translationally, specific enzymatic cleavages in vivo yield mature proteins. Envelope glycoproteins are synthesized as an inactive precursor that is heavily N-glycosylated and processed likely by host cell furin in the Golgi to yield the mature SU and TM proteins. The cleavage site between SU and TM requires the minimal sequence [KR]-X-[KR]-R. About 2 of the 9 disulfide bonds of gp41 are reduced by P4HB/PDI, following binding to CD4 receptor.

The protein resides in the virion membrane. The protein localises to the host cell membrane. Its subcellular location is the host endosome membrane. In terms of biological role, oligomerizes in the host endoplasmic reticulum into predominantly trimers. In a second time, gp160 transits in the host Golgi, where glycosylation is completed. The precursor is then proteolytically cleaved in the trans-Golgi and thereby activated by cellular furin or furin-like proteases to produce gp120 and gp41. Functionally, attaches the virus to the host lymphoid cell by binding to the primary receptor CD4. This interaction induces a structural rearrangement creating a high affinity binding site for a chemokine coreceptor like CXCR4 and/or CCR5. Acts as a ligand for CD209/DC-SIGN and CLEC4M/DC-SIGNR, which are respectively found on dendritic cells (DCs), and on endothelial cells of liver sinusoids and lymph node sinuses. These interactions allow capture of viral particles at mucosal surfaces by these cells and subsequent transmission to permissive cells. HIV subverts the migration properties of dendritic cells to gain access to CD4+ T-cells in lymph nodes. Virus transmission to permissive T-cells occurs either in trans (without DCs infection, through viral capture and transmission), or in cis (following DCs productive infection, through the usual CD4-gp120 interaction), thereby inducing a robust infection. In trans infection, bound virions remain infectious over days and it is proposed that they are not degraded, but protected in non-lysosomal acidic organelles within the DCs close to the cell membrane thus contributing to the viral infectious potential during DCs' migration from the periphery to the lymphoid tissues. On arrival at lymphoid tissues, intact virions recycle back to DCs' cell surface allowing virus transmission to CD4+ T-cells. Its function is as follows. Acts as a class I viral fusion protein. Under the current model, the protein has at least 3 conformational states: pre-fusion native state, pre-hairpin intermediate state, and post-fusion hairpin state. During fusion of viral and target intracellular membranes, the coiled coil regions (heptad repeats) assume a trimer-of-hairpins structure, positioning the fusion peptide in close proximity to the C-terminal region of the ectodomain. The formation of this structure appears to drive apposition and subsequent fusion of viral and target cell membranes. Complete fusion occurs in host cell endosomes and is dynamin-dependent, however some lipid transfer might occur at the plasma membrane. The virus undergoes clathrin-dependent internalization long before endosomal fusion, thus minimizing the surface exposure of conserved viral epitopes during fusion and reducing the efficacy of inhibitors targeting these epitopes. Membranes fusion leads to delivery of the nucleocapsid into the cytoplasm. This is Envelope glycoprotein gp160 from Human immunodeficiency virus type 1 group M subtype D (isolate ELI) (HIV-1).